The chain runs to 473 residues: Alliin lyase 2 (473 aa).

Positions 1 to 15 (MICLVILTCIIMSNS) are cleaved as a signal peptide. The propeptide occupies 16 to 25 (FVNNNNMVQA). The EGF-like; atypical domain occupies 38–84 (EAVANINCSEHGRAFLDGIISEGSPKCECNTCYTGPDCSEKIQGCSA). A glycan (N-linked (GlcNAc...) asparagine) is linked at asparagine 44. 3 cysteine pairs are disulfide-bonded: cysteine 45–cysteine 64, cysteine 66–cysteine 75, and cysteine 69–cysteine 82. 117 to 125 (YFFNPVSNF) is a chloride binding site. Residues asparagine 171 and asparagine 216 are each glycosylated (N-linked (GlcNAc...) asparagine). Lysine 276 is subject to N6-(pyridoxal phosphate)lysine. A glycan (N-linked (GlcNAc...) asparagine) is linked at asparagine 353. Cysteine 393 and cysteine 401 form a disulfide bridge.

The protein belongs to the alliinase family. As to quaternary structure, homodimer. Requires pyridoxal 5'-phosphate as cofactor. Glycosylated. High expression in bulbs, lower expression in leaves, and no expression in roots.

Its subcellular location is the vacuole. The enzyme catalyses an S-alkyl-L-cysteine S-oxide = an S-alkyl sulfenate + 2-aminoprop-2-enoate. The catalysed reaction is alliin = allylsulfenate + 2-aminoprop-2-enoate. Its function is as follows. Able to cleave the C-S bond of sulfoxide derivatives of Cys to produce allicin, thus giving rise to all sulfur compounds which are responsible for most of the properties of garlic, such as the specific smell and flavor as well as the health benefits like blood lipid or blood pressure lowering. In Allium sativum (Garlic), this protein is Alliin lyase 2.